Here is a 546-residue protein sequence, read N- to C-terminus: MTKYVFVTGGVVSSLGKGIASASLAALLESRGLRVTLLKLDPYINVDPGTMSPFQHGEVFVTDDGAETDLDLGHYERFSSARMSKRNNFTTGQIYKSVIDKERRGDYLGGTVQVIPHITDEIKLSIREGAKGADVALVEIGGTVGDIESLPFLEAIRQMGFEDGPANTCFIHLTLLPYIPTAGELKTKPTQHSVKELREIGIQPDILLCRADREIPLDERRKIALFTNVRPEAVIEVLDADSIYKIPAMLHEQMLDEIVCHKLNILARAADLSVWKRLVDALEHPEHTVNIAFVGKYVDLTESYKSLSEAMIHAGMHTKSRVKIHYVDSEQIEKSGVDCLRGMDAILVPGGFGKRGVEGKIAAIRYARENRVPYLGICLGMQLAVVEFARDVAGMADAQSTEFDPTTNHPVIGLITEWLDRTGQVEKRSEQSDLGGTMRLGGQPCTLKNGTLAREIYGADSIVERHRHRYEVNNTLLSELEAKGLVVAGRAPGTELCEMVELPPAVHPWFVGCQFHPEFTSNPRNGHPLFISFVRAALAHQQKDSA.

Positions 1–265 (MTKYVFVTGG…DEIVCHKLNI (265 aa)) are amidoligase domain. Residue Ser13 participates in CTP binding. Residue Ser13 participates in UTP binding. ATP-binding positions include 14-19 (SLGKGI) and Asp71. Residues Asp71 and Glu139 each coordinate Mg(2+). CTP is bound by residues 146 to 148 (DIE), 186 to 191 (KTKPTQ), and Lys222. UTP-binding positions include 186–191 (KTKPTQ) and Lys222. The 254-residue stretch at 290-543 (NIAFVGKYVD…VRAALAHQQK (254 aa)) folds into the Glutamine amidotransferase type-1 domain. Position 351 (Gly351) interacts with L-glutamine. Cys378 (nucleophile; for glutamine hydrolysis) is an active-site residue. Residues 379–382 (LGMQ), Glu402, and Arg469 each bind L-glutamine. Residues His516 and Glu518 contribute to the active site.

It belongs to the CTP synthase family. In terms of assembly, homotetramer.

It carries out the reaction UTP + L-glutamine + ATP + H2O = CTP + L-glutamate + ADP + phosphate + 2 H(+). The enzyme catalyses L-glutamine + H2O = L-glutamate + NH4(+). The catalysed reaction is UTP + NH4(+) + ATP = CTP + ADP + phosphate + 2 H(+). It functions in the pathway pyrimidine metabolism; CTP biosynthesis via de novo pathway; CTP from UDP: step 2/2. With respect to regulation, allosterically activated by GTP, when glutamine is the substrate; GTP has no effect on the reaction when ammonia is the substrate. The allosteric effector GTP functions by stabilizing the protein conformation that binds the tetrahedral intermediate(s) formed during glutamine hydrolysis. Inhibited by the product CTP, via allosteric rather than competitive inhibition. Functionally, catalyzes the ATP-dependent amination of UTP to CTP with either L-glutamine or ammonia as the source of nitrogen. Regulates intracellular CTP levels through interactions with the four ribonucleotide triphosphates. This Thiobacillus denitrificans (strain ATCC 25259 / T1) protein is CTP synthase.